Consider the following 451-residue polypeptide: Proline--tRNA ligase (451 aa).

It belongs to the class-II aminoacyl-tRNA synthetase family. ProS type 2 subfamily. As to quaternary structure, homodimer.

It localises to the cytoplasm. The enzyme catalyses tRNA(Pro) + L-proline + ATP = L-prolyl-tRNA(Pro) + AMP + diphosphate. Catalyzes the attachment of proline to tRNA(Pro) in a two-step reaction: proline is first activated by ATP to form Pro-AMP and then transferred to the acceptor end of tRNA(Pro). The sequence is that of Proline--tRNA ligase from Roseobacter denitrificans (strain ATCC 33942 / OCh 114) (Erythrobacter sp. (strain OCh 114)).